Reading from the N-terminus, the 316-residue chain is Cytochrome c oxidase assembly protein COX18, mitochondrial (316 aa).

A helical membrane pass occupies residues 164-184; that stretch reads WKNALLPMVQIPLWVTVSMGI. The Mitochondrial matrix segment spans residues 185 to 213; that stretch reads RTLTETQLIESFYPSWFSALGFSSFDLSS. Residues 214–234 form a helical membrane-spanning segment; the sequence is PLVAMPLLAPILVGTLAVLNV. Residues 235–274 are Mitochondrial intermembrane-facing; sequence ELNGRLMFSSSLSSQGIKTISRNSTRVQEAMTSILNVSRL. Residues 275–295 form a helical membrane-spanning segment; the sequence is GCVVMLAMSSQAPFLLSLYWI. Residues 296–316 are Mitochondrial matrix-facing; that stretch reads SSQLFSLVQNIILNWIYPYQR.

This sequence belongs to the OXA1/ALB3/YidC family. Interacts with PNT1 and MSS2.

It is found in the mitochondrion inner membrane. Functionally, required for the insertion of integral membrane proteins into the mitochondrial inner membrane. Essential for the activity and assembly of cytochrome c oxidase. Plays a central role in the translocation and export of the C-terminal part of the COX2 protein into the mitochondrial intermembrane space. This Saccharomyces cerevisiae (strain ATCC 204508 / S288c) (Baker's yeast) protein is Cytochrome c oxidase assembly protein COX18, mitochondrial (COX18).